The chain runs to 256 residues: Thiazole synthase (256 aa).

The active-site Schiff-base intermediate with DXP is the lysine 95. Residues glycine 156, 182–183 (AG), and 204–205 (NT) contribute to the 1-deoxy-D-xylulose 5-phosphate site.

The protein belongs to the ThiG family. As to quaternary structure, homotetramer. Forms heterodimers with either ThiH or ThiS.

Its subcellular location is the cytoplasm. The enzyme catalyses [ThiS sulfur-carrier protein]-C-terminal-Gly-aminoethanethioate + 2-iminoacetate + 1-deoxy-D-xylulose 5-phosphate = [ThiS sulfur-carrier protein]-C-terminal Gly-Gly + 2-[(2R,5Z)-2-carboxy-4-methylthiazol-5(2H)-ylidene]ethyl phosphate + 2 H2O + H(+). The protein operates within cofactor biosynthesis; thiamine diphosphate biosynthesis. Catalyzes the rearrangement of 1-deoxy-D-xylulose 5-phosphate (DXP) to produce the thiazole phosphate moiety of thiamine. Sulfur is provided by the thiocarboxylate moiety of the carrier protein ThiS. In vitro, sulfur can be provided by H(2)S. The polypeptide is Thiazole synthase (Cronobacter sakazakii (strain ATCC BAA-894) (Enterobacter sakazakii)).